Consider the following 155-residue polypeptide: Mediator of RNA polymerase II transcription subunit 21 (155 aa).

Residues 29–73 (QAPPSVPPGQHRVDTMPEIKGKAASENPQSNPPQPAEPPVPEKIS) form a disordered region. Residues 39 to 51 (HRVDTMPEIKGKA) show a composition bias toward basic and acidic residues. Residues 58-69 (SNPPQPAEPPVP) are compositionally biased toward pro residues. Residues 75-147 (EQFNQDLKEF…EVLLKKVEDK (73 aa)) adopt a coiled-coil conformation.

The protein belongs to the Mediator complex subunit 21 family. Component of the Mediator complex.

The protein resides in the nucleus. Component of the Mediator complex, a coactivator involved in the regulated transcription of nearly all RNA polymerase II-dependent genes. Mediator functions as a bridge to convey information from gene-specific regulatory proteins to the basal RNA polymerase II transcription machinery. Mediator is recruited to promoters by direct interactions with regulatory proteins and serves as a scaffold for the assembly of a functional preinitiation complex with RNA polymerase II and the general transcription factors. This chain is Mediator of RNA polymerase II transcription subunit 21 (SRB7), found in Phaeosphaeria nodorum (strain SN15 / ATCC MYA-4574 / FGSC 10173) (Glume blotch fungus).